We begin with the raw amino-acid sequence, 1396 residues long: DNA-directed RNA polymerase subunit beta' (1396 aa).

Zn(2+) is bound by residues C71, C73, C86, and C89. Residues D462, D464, and D466 each coordinate Mg(2+). 4 residues coordinate Zn(2+): C810, C884, C891, and C894. The segment covering 1372 to 1382 (DEQLAQQREDA) has biased composition (basic and acidic residues). Positions 1372–1396 (DEQLAQQREDAMEPLPAEIALSDAE) are disordered.

The protein belongs to the RNA polymerase beta' chain family. As to quaternary structure, the RNAP catalytic core consists of 2 alpha, 1 beta, 1 beta' and 1 omega subunit. When a sigma factor is associated with the core the holoenzyme is formed, which can initiate transcription. Requires Mg(2+) as cofactor. Zn(2+) is required as a cofactor.

The enzyme catalyses RNA(n) + a ribonucleoside 5'-triphosphate = RNA(n+1) + diphosphate. Its function is as follows. DNA-dependent RNA polymerase catalyzes the transcription of DNA into RNA using the four ribonucleoside triphosphates as substrates. The protein is DNA-directed RNA polymerase subunit beta' of Caulobacter vibrioides (strain ATCC 19089 / CIP 103742 / CB 15) (Caulobacter crescentus).